The primary structure comprises 400 residues: Spaetzle-processing enzyme (400 aa).

Positions 1–27 (MASTERNFLLLSLVVSALSGLVHRSDA) are cleaved as a signal peptide. The region spanning 34–94 (SCTPQQSDER…GLVNRILVCC (61 aa)) is the Clip domain. 6 cysteine pairs are disulfide-bonded: cysteine 35–cysteine 93, cysteine 46–cysteine 77, cysteine 52–cysteine 94, cysteine 127–cysteine 269, cysteine 166–cysteine 182, and cysteine 211–cysteine 221. Positions 135–399 (IFGGTNTTLW…FIDWIKQKLE (265 aa)) constitute a Peptidase S1 domain. A glycan (N-linked (GlcNAc...) asparagine) is linked at asparagine 140. The active-site Charge relay system is histidine 181. Glutamate 202, aspartate 204, threonine 207, and aspartate 210 together coordinate Ca(2+). Catalysis depends on aspartate 249, which acts as the Charge relay system. Asparagine 311 carries N-linked (GlcNAc...) asparagine glycosylation. 2 disulfides stabilise this stretch: cysteine 315/cysteine 332 and cysteine 342/cysteine 375. The active-site Charge relay system is the serine 346.

The protein belongs to the peptidase S1 family. CLIP subfamily. In terms of assembly, in the active form, heterodimer of a light chain and a heavy chain; disulfide-linked. Proteolytically cleaved in response to Gram-negative bacterial or fungal infection; processing is likely to result in its activation. Cleavage produces a light chain containing the CLIP domain and a catalytic heavy chain which remain covalently associated through an interchain disulfide bond.

It localises to the secreted. In terms of biological role, endopeptidase which plays a key role in innate immunity by cleaving Tl ligand spz and thereby activating the Toll pathway in response to fungal and Gram-positive bacterial infections. Acts downstream of pathogen recognition receptors PGRP-SA and GNBP1 and protease grass in response to Gram-positive bacterial infection. Acts downstream of protease psh in response to fungal infection. In Drosophila melanogaster (Fruit fly), this protein is Spaetzle-processing enzyme.